The primary structure comprises 51 residues: Large ribosomal subunit protein eL39z/eL39x (51 aa).

Residues 1–21 (MPSHKSFMIKKKLGKKMRQNR) are disordered. The span at 7–19 (FMIKKKLGKKMRQ) shows a compositional bias: basic residues.

This sequence belongs to the eukaryotic ribosomal protein eL39 family.

This Arabidopsis thaliana (Mouse-ear cress) protein is Large ribosomal subunit protein eL39z/eL39x (RPL39A).